A 428-amino-acid polypeptide reads, in one-letter code: Serine--tRNA ligase (428 aa).

L-serine is bound at residue threonine 233 to glutamate 235. Arginine 264–glutamate 266 lines the ATP pocket. Glutamate 287 serves as a coordination point for L-serine. ATP is bound at residue glutamate 351–serine 354. Serine 387 contacts L-serine.

The protein belongs to the class-II aminoacyl-tRNA synthetase family. Type-1 seryl-tRNA synthetase subfamily. Homodimer. The tRNA molecule binds across the dimer.

The protein resides in the cytoplasm. The catalysed reaction is tRNA(Ser) + L-serine + ATP = L-seryl-tRNA(Ser) + AMP + diphosphate + H(+). The enzyme catalyses tRNA(Sec) + L-serine + ATP = L-seryl-tRNA(Sec) + AMP + diphosphate + H(+). It participates in aminoacyl-tRNA biosynthesis; selenocysteinyl-tRNA(Sec) biosynthesis; L-seryl-tRNA(Sec) from L-serine and tRNA(Sec): step 1/1. In terms of biological role, catalyzes the attachment of serine to tRNA(Ser). Is also able to aminoacylate tRNA(Sec) with serine, to form the misacylated tRNA L-seryl-tRNA(Sec), which will be further converted into selenocysteinyl-tRNA(Sec). This chain is Serine--tRNA ligase, found in Salinibacter ruber (strain DSM 13855 / M31).